The primary structure comprises 356 residues: MFAKLEGLEKKYLELEEALAQPDVFNDQDQYRKLTKAHADLSDVVELFRRHRAVSEELAENRLLLHDEDPEIRAMAQEEVHRGEAELPNLEHELKVMLLPSDPLDEKNTILEIRAGTGGEEAALFAADLFRMYTRYAELKNWKVEIMSESPSENGGYKEIICLIAGDRVYSHLKFEAGTHRVQRVPATEAQGRIHTSAATVAVMPEAEEVDVEIRPEDLRIDIYRASGAGGQHVNKTESAVRITHLPTNTVVTCQDERSQHKNKARAMKVLASRILAAERERQSSELSADRKAQVGSGDRSERIRTYNFPQGRCTDHRINLTLYSLDRIMEGELESLVEALGTAAQAEALKAQASE.

The residue at position 232 (Gln-232) is an N5-methylglutamine. The disordered stretch occupies residues 281–301 (ERQSSELSADRKAQVGSGDRS).

It belongs to the prokaryotic/mitochondrial release factor family. In terms of processing, methylated by PrmC. Methylation increases the termination efficiency of RF1.

The protein resides in the cytoplasm. Its function is as follows. Peptide chain release factor 1 directs the termination of translation in response to the peptide chain termination codons UAG and UAA. The protein is Peptide chain release factor 1 of Desulfovibrio desulfuricans (strain ATCC 27774 / DSM 6949 / MB).